A 516-amino-acid polypeptide reads, in one-letter code: Multicopper oxidase CueO (516 aa).

Residues 1–28 (MQRRDFLKYSVALGVASALPLWSRAVFA) constitute a signal peptide (tat-type signal). Plastocyanin-like domains lie at 55–165 (GQST…IEDD), 227–292 (PRGW…DNKP), and 399–516 (GGKF…GFTV). His-101, His-103, His-141, and His-143 together coordinate Cu cation. 7 residues coordinate Cu cation: His-443, His-446, His-448, His-499, Cys-500, His-501, and His-505.

This sequence belongs to the multicopper oxidase family. In terms of assembly, monomer. It depends on Cu cation as a cofactor. Predicted to be exported by the Tat system. The position of the signal peptide cleavage has not been experimentally proven.

It is found in the periplasm. It carries out the reaction 4 Cu(+) + O2 + 4 H(+) = 4 Cu(2+) + 2 H2O. Its function is as follows. Multicopper oxidase involved in copper homeostasis and copper tolerance under aerobic conditions. Is responsible for the oxidation of Cu(+) to the less harmful Cu(2+) in the periplasm, thereby preventing Cu(+) from entering the cytoplasm. This chain is Multicopper oxidase CueO (cueO), found in Escherichia coli O157:H7.